The chain runs to 552 residues: Hydroxylamine reductase (552 aa).

C3, C6, C15, and C21 together coordinate [4Fe-4S] cluster. H247, E271, C315, C407, C435, C460, E495, and K497 together coordinate hybrid [4Fe-2O-2S] cluster. Cysteine persulfide is present on C407.

This sequence belongs to the HCP family. [4Fe-4S] cluster serves as cofactor. The cofactor is hybrid [4Fe-2O-2S] cluster.

The protein localises to the cytoplasm. The catalysed reaction is A + NH4(+) + H2O = hydroxylamine + AH2 + H(+). Functionally, catalyzes the reduction of hydroxylamine to form NH(3) and H(2)O. This is Hydroxylamine reductase from Thermosipho melanesiensis (strain DSM 12029 / CIP 104789 / BI429).